The chain runs to 335 residues: DNA-directed RNA polymerase subunit alpha (335 aa).

Residues 1-233 (MQRNWRELIK…DQLTIFINFE (233 aa)) form an alpha N-terminal domain (alpha-NTD) region. The interval 249 to 335 (FNDHLFRSVD…DIENRRKEQE (87 aa)) is alpha C-terminal domain (alpha-CTD).

This sequence belongs to the RNA polymerase alpha chain family. In terms of assembly, homodimer. The RNAP catalytic core consists of 2 alpha, 1 beta, 1 beta' and 1 omega subunit. When a sigma factor is associated with the core the holoenzyme is formed, which can initiate transcription.

The catalysed reaction is RNA(n) + a ribonucleoside 5'-triphosphate = RNA(n+1) + diphosphate. Functionally, DNA-dependent RNA polymerase catalyzes the transcription of DNA into RNA using the four ribonucleoside triphosphates as substrates. The sequence is that of DNA-directed RNA polymerase subunit alpha from Syntrophobacter fumaroxidans (strain DSM 10017 / MPOB).